A 433-amino-acid chain; its full sequence is Glutamate-1-semialdehyde 2,1-aminomutase (433 aa).

K273 bears the N6-(pyridoxal phosphate)lysine mark.

Belongs to the class-III pyridoxal-phosphate-dependent aminotransferase family. HemL subfamily. As to quaternary structure, homodimer. Requires pyridoxal 5'-phosphate as cofactor.

It is found in the cytoplasm. It catalyses the reaction (S)-4-amino-5-oxopentanoate = 5-aminolevulinate. It functions in the pathway porphyrin-containing compound metabolism; protoporphyrin-IX biosynthesis; 5-aminolevulinate from L-glutamyl-tRNA(Glu): step 2/2. This Polynucleobacter necessarius subsp. necessarius (strain STIR1) protein is Glutamate-1-semialdehyde 2,1-aminomutase.